A 444-amino-acid chain; its full sequence is Xylose isomerase (444 aa).

Catalysis depends on residues H101 and D104. E232, E268, H271, D296, D307, D309, and D339 together coordinate Mg(2+).

The protein belongs to the xylose isomerase family. In terms of assembly, homotetramer. The cofactor is Mg(2+).

It localises to the cytoplasm. The enzyme catalyses alpha-D-xylose = alpha-D-xylulofuranose. The chain is Xylose isomerase from Thermotoga sp. (strain RQ2).